The following is a 319-amino-acid chain: Translocon-associated protein subunit alpha (319 aa).

The first 21 residues, 1–21 (MRLLPRLLLLFLLAFPAAVLL), serve as a signal peptide directing secretion. The Lumenal portion of the chain corresponds to 22-208 (RGGPGGSLAV…EREDGLDGET (187 aa)). The segment covering 35-76 (LTEDEETVEDPIIEDEDDEAEVEEDEPTDLAEEKEEEEDVSS) has biased composition (acidic residues). The interval 35 to 84 (LTEDEETVEDPIIEDEDDEAEVEEDEPTDLAEEKEEEEDVSSEPEASPSA) is disordered. 2 N-linked (GlcNAc...) asparagine glycosylation sites follow: N137 and N192. A helical transmembrane segment spans residues 209–229 (IFMYMFLAGLGLLVVVGLHQL). Residues 230–319 (LESRKRKRPI…SLRQLAVCGI (90 aa)) lie on the Cytoplasmic side of the membrane. S248 is modified (phosphoserine). T261 carries the phosphothreonine modification.

It belongs to the TRAP-alpha family. In terms of assembly, heterotetramer of TRAP-alpha, TRAP-beta, TRAP-delta and TRAP-gamma. Interacts with palmitoylated calnexin (CALX), the interaction is required for efficient folding of glycosylated proteins.

The protein localises to the endoplasmic reticulum membrane. In terms of biological role, TRAP proteins are part of a complex whose function is to bind calcium to the ER membrane and thereby regulate the retention of ER resident proteins. May be involved in the recycling of the translocation apparatus after completion of the translocation process or may function as a membrane-bound chaperone facilitating folding of translocated proteins. In Rattus norvegicus (Rat), this protein is Translocon-associated protein subunit alpha (Ssr1).